Consider the following 87-residue polypeptide: UPF0250 protein YbeD (87 aa).

This sequence belongs to the UPF0250 family.

In Shigella boydii serotype 18 (strain CDC 3083-94 / BS512), this protein is UPF0250 protein YbeD.